The chain runs to 432 residues: MPDYVNWLRHASPYINSHRDRTFVVMLPGEGVEHPNFGNIVHDLVLLHSLGARLVLVHGSRPQIEARLAARGLAPRYHRDLRVTDAPTLECVIDAVGSLRIAIEARLSMDMAASPMQGARLRVAGGNLVTARPIGVVEGVDYHHTGEVRRIDRKGIGRLLDERSIVLLSPLGYSPTGEIFNLACEDVAMRAAIDLEAEKLILYGAEQGLLDASGKLVRELRPQQVPAHLQRLGNSYQAELLDAAAQACRAGVKRSHIVSYTEDGALLSELFTRTGNGTLVAQEQFEQLREAGIEDVGGLIELIRPLEEQGILVRRSREVLEREIEQFSIVEREGLIIACAALYPIADSEAGELACLAVNPEYRHGGRGDELLERIEERARGLGLKTLFVLTTRTAHWFRERGFQPSSVERLPAARASLYNFQRNSQVFEKSL.

The region spanning 286-425 (EQLREAGIED…ASLYNFQRNS (140 aa)) is the N-acetyltransferase domain.

Belongs to the acetyltransferase family. ArgA subfamily.

It is found in the cytoplasm. The enzyme catalyses L-glutamate + acetyl-CoA = N-acetyl-L-glutamate + CoA + H(+). Its pathway is amino-acid biosynthesis; L-arginine biosynthesis; N(2)-acetyl-L-ornithine from L-glutamate: step 1/4. This chain is Amino-acid acetyltransferase, found in Pseudomonas aeruginosa (strain LESB58).